Here is a 979-residue protein sequence, read N- to C-terminus: Translation initiation factor IF-2 (979 aa).

Residues 68-392 (VKQKQGTPAS…SRAAQDAMEL (325 aa)) are disordered. 3 stretches are compositionally biased toward basic and acidic residues: residues 102–179 (QDMR…KPEE), 217–229 (EMEK…EVFR), and 260–273 (TKED…DADG). Polar residues predominate over residues 309–326 (PSGNKNNNRPAQQQSNAS). The segment covering 347-356 (DVQRQVKETL) has biased composition (basic and acidic residues). The tr-type G domain maps to 478-646 (ARPPIVTVMG…KVLLEADILE (169 aa)). A G1 region spans residues 487–494 (GHVDHGKT). 487 to 494 (GHVDHGKT) provides a ligand contact to GTP. A G2 region spans residues 512 to 516 (GITQH). The interval 534–537 (DTPG) is G3. GTP-binding positions include 534–538 (DTPGH) and 588–591 (NKID). Residues 588 to 591 (NKID) form a G4 region. Residues 624 to 626 (SAK) form a G5 region.

It belongs to the TRAFAC class translation factor GTPase superfamily. Classic translation factor GTPase family. IF-2 subfamily.

Its subcellular location is the cytoplasm. Its function is as follows. One of the essential components for the initiation of protein synthesis. Protects formylmethionyl-tRNA from spontaneous hydrolysis and promotes its binding to the 30S ribosomal subunits. Also involved in the hydrolysis of GTP during the formation of the 70S ribosomal complex. In Porphyromonas gingivalis (strain ATCC 33277 / DSM 20709 / CIP 103683 / JCM 12257 / NCTC 11834 / 2561), this protein is Translation initiation factor IF-2.